The primary structure comprises 361 residues: MIIKILDPSKNATYLWLPVYFYDEPFQFQILSSIIELVFYISCFHLMTISLYVMLKVQIFHRNLYILYIPMFCVWYGLIAGKLITIAYRLKFVDLDYELGEHIAMWTDDQAKMLHVSSLRGLELLIFGGFVQWHYMYTVVYGILGVAAERAIASVLIENYETNTQLYIPIALTIITQFLAISTSLSVLFHKASVFLSHLPWIISCSLGALAYLFIKIVNENFQKQITNPRRKRLFTISQQFQVKENLRALRLGTRLVFVVFFYVAFVSFGMFALAFDLVSSAYCHFVENFLFLNPYPICFTAMLTIPHWRKHFQNACFTWRLVKSAWTKPKTSTTSVEISTTKKLEAETDLYFRQLNESWI.

7 helical membrane-spanning segments follow: residues 34–54 (IIEL…LYVM), 66–86 (ILYI…LITI), 124–144 (LLIF…YGIL), 168–188 (IPIA…LSVL), 195–215 (FLSH…YLFI), 256–276 (LVFV…ALAF), and 286–306 (FVEN…MLTI).

It belongs to the nematode receptor-like protein sre family.

Its subcellular location is the membrane. The protein is Serpentine receptor class epsilon-32 (sre-32) of Caenorhabditis elegans.